The following is a 392-amino-acid chain: Formate-dependent phosphoribosylglycinamide formyltransferase (392 aa).

N(1)-(5-phospho-beta-D-ribosyl)glycinamide is bound by residues 20 to 21 (EL) and Glu80. ATP contacts are provided by residues Arg112, Lys153, 158–163 (SSGKGQ), 193–196 (EGFV), and Glu201. Residues 117–306 (RLAAETLGLP…EFALHVRAIL (190 aa)) enclose the ATP-grasp domain. Glu265 and Glu277 together coordinate Mg(2+). Residues Asp284, Lys355, and 362-363 (RR) contribute to the N(1)-(5-phospho-beta-D-ribosyl)glycinamide site.

Belongs to the PurK/PurT family. In terms of assembly, homodimer.

It carries out the reaction N(1)-(5-phospho-beta-D-ribosyl)glycinamide + formate + ATP = N(2)-formyl-N(1)-(5-phospho-beta-D-ribosyl)glycinamide + ADP + phosphate + H(+). It functions in the pathway purine metabolism; IMP biosynthesis via de novo pathway; N(2)-formyl-N(1)-(5-phospho-D-ribosyl)glycinamide from N(1)-(5-phospho-D-ribosyl)glycinamide (formate route): step 1/1. Functionally, involved in the de novo purine biosynthesis. Catalyzes the transfer of formate to 5-phospho-ribosyl-glycinamide (GAR), producing 5-phospho-ribosyl-N-formylglycinamide (FGAR). Formate is provided by PurU via hydrolysis of 10-formyl-tetrahydrofolate. The protein is Formate-dependent phosphoribosylglycinamide formyltransferase of Aeromonas hydrophila subsp. hydrophila (strain ATCC 7966 / DSM 30187 / BCRC 13018 / CCUG 14551 / JCM 1027 / KCTC 2358 / NCIMB 9240 / NCTC 8049).